Reading from the N-terminus, the 185-residue chain is Gastrokine-1 (185 aa).

An N-terminal signal peptide occupies residues 1-20 (MKFTIAFAGLLGVFLTPALA). The region spanning 54 to 150 (NNGWNSWNAL…MCKGIPTYMA (97 aa)) is the BRICHOS domain. Residues Cys81 and Cys142 are joined by a disulfide bond.

It belongs to the gastrokine family. In terms of tissue distribution, highly expressed specifically in surface cells of the antrum mucosa from where it is secreted.

The protein localises to the secreted. It localises to the cytoplasmic granule. It is found in the golgi apparatus. Has mitogenic activity and may be involved in maintaining the integrity of the gastric mucosal epithelium. The protein is Gastrokine-1 (GKN1) of Sus scrofa (Pig).